The sequence spans 261 residues: Imidazole glycerol phosphate synthase subunit HisF (261 aa).

Active-site residues include Asp-16 and Asp-135.

It belongs to the HisA/HisF family. In terms of assembly, heterodimer of HisH and HisF.

It localises to the cytoplasm. It carries out the reaction 5-[(5-phospho-1-deoxy-D-ribulos-1-ylimino)methylamino]-1-(5-phospho-beta-D-ribosyl)imidazole-4-carboxamide + L-glutamine = D-erythro-1-(imidazol-4-yl)glycerol 3-phosphate + 5-amino-1-(5-phospho-beta-D-ribosyl)imidazole-4-carboxamide + L-glutamate + H(+). The protein operates within amino-acid biosynthesis; L-histidine biosynthesis; L-histidine from 5-phospho-alpha-D-ribose 1-diphosphate: step 5/9. IGPS catalyzes the conversion of PRFAR and glutamine to IGP, AICAR and glutamate. The HisF subunit catalyzes the cyclization activity that produces IGP and AICAR from PRFAR using the ammonia provided by the HisH subunit. The polypeptide is Imidazole glycerol phosphate synthase subunit HisF (Mycolicibacterium vanbaalenii (strain DSM 7251 / JCM 13017 / BCRC 16820 / KCTC 9966 / NRRL B-24157 / PYR-1) (Mycobacterium vanbaalenii)).